A 334-amino-acid chain; its full sequence is GTP 3',8-cyclase (334 aa).

Residues 11 to 236 (GFNRKIDYLR…ESTESSQGPA (226 aa)) form the Radical SAM core domain. Arg20 contributes to the GTP binding site. The [4Fe-4S] cluster site is built by Cys27 and Cys31. Tyr33 is a binding site for S-adenosyl-L-methionine. [4Fe-4S] cluster is bound at residue Cys34. Arg69 contacts GTP. Gly73 contacts S-adenosyl-L-methionine. Thr100 is a binding site for GTP. An S-adenosyl-L-methionine-binding site is contributed by Ser124. Position 161 (Lys161) interacts with GTP. Met195 serves as a coordination point for S-adenosyl-L-methionine. 2 residues coordinate [4Fe-4S] cluster: Cys260 and Cys263. 265–267 (RVR) is a GTP binding site. Cys277 is a [4Fe-4S] cluster binding site.

It belongs to the radical SAM superfamily. MoaA family. Monomer and homodimer. Requires [4Fe-4S] cluster as cofactor.

The enzyme catalyses GTP + AH2 + S-adenosyl-L-methionine = (8S)-3',8-cyclo-7,8-dihydroguanosine 5'-triphosphate + 5'-deoxyadenosine + L-methionine + A + H(+). The protein operates within cofactor biosynthesis; molybdopterin biosynthesis. Catalyzes the cyclization of GTP to (8S)-3',8-cyclo-7,8-dihydroguanosine 5'-triphosphate. In Pseudomonas putida (strain W619), this protein is GTP 3',8-cyclase.